A 250-amino-acid polypeptide reads, in one-letter code: Acetylglutamate kinase (250 aa).

Substrate is bound by residues glycine 41–glycine 42, arginine 63, and asparagine 156.

The protein belongs to the acetylglutamate kinase family. ArgB subfamily.

Its subcellular location is the cytoplasm. It catalyses the reaction N-acetyl-L-glutamate + ATP = N-acetyl-L-glutamyl 5-phosphate + ADP. Its pathway is amino-acid biosynthesis; L-arginine biosynthesis; N(2)-acetyl-L-ornithine from L-glutamate: step 2/4. Catalyzes the ATP-dependent phosphorylation of N-acetyl-L-glutamate. The sequence is that of Acetylglutamate kinase from Listeria monocytogenes serotype 4b (strain F2365).